The sequence spans 73 residues: UPF0435 protein BH2488 (73 aa).

This sequence belongs to the UPF0435 family.

The chain is UPF0435 protein BH2488 from Halalkalibacterium halodurans (strain ATCC BAA-125 / DSM 18197 / FERM 7344 / JCM 9153 / C-125) (Bacillus halodurans).